Here is a 439-residue protein sequence, read N- to C-terminus: GTPase Der (439 aa).

2 consecutive EngA-type G domains span residues 4 to 168 and 177 to 352; these read PIVA…KDDE and INIA…DNYT. Residues 10–17, 57–61, 120–123, 183–190, 230–234, and 295–298 contribute to the GTP site; these read GRPNVGKS, DTGGI, NKID, GKPNVGKS, DTAGL, and NKWD. Residues 353–437 form the KH-like domain; sequence KRVKTGVLND…GIKLEFRERK (85 aa).

It belongs to the TRAFAC class TrmE-Era-EngA-EngB-Septin-like GTPase superfamily. EngA (Der) GTPase family. In terms of assembly, associates with the 50S ribosomal subunit.

Functionally, GTPase that plays an essential role in the late steps of ribosome biogenesis. This chain is GTPase Der, found in Clostridium botulinum (strain Okra / Type B1).